Here is a 216-residue protein sequence, read N- to C-terminus: UPF0598 protein C8orf82 (216 aa).

It belongs to the UPF0598 family.

This is UPF0598 protein C8orf82 (C8orf82) from Homo sapiens (Human).